Consider the following 745-residue polypeptide: Copper-transporting ATPase (745 aa).

The 67-residue stretch at 1 to 67 (MKESFYIEGM…LIEKLGYSPK (67 aa)) folds into the HMA domain. Topologically, residues 1-83 (MKESFYIEGM…KKEFFSPNVK (83 aa)) are cytoplasmic. Positions 12 and 15 each coordinate Cu cation. A helical transmembrane segment spans residues 84-104 (LALAVIFTLFVVYLSMGAMLS). Residues 105–124 (PSLLPESLLAINNHSNFLNA) are Extracellular-facing. A helical membrane pass occupies residues 125–144 (CLQLIGALIVMHLGRDFYIQ). Topologically, residues 145-151 (GFKALWH) are cytoplasmic. A helical transmembrane segment spans residues 152–172 (RQPNMSSLIAIGTSAALISSL). At 173–194 (WQLYLVYTNHYTDQWSYGHYYF) the chain is on the extracellular side. A helical transmembrane segment spans residues 195-215 (ESVCVILMFVMVGKRIENVSK). At 216 to 343 (DKALDAMQAL…KAEISRLADK (128 aa)) the chain is on the cytoplasmic side. A helical membrane pass occupies residues 344–366 (VSSVFVPSVIAIAILAFVVWLII). Topologically, residues 367–379 (APKPDFWWNFGIA) are extracellular. A helical transmembrane segment spans residues 380–397 (LEVFVSVLVISCPCALGL). At 398–685 (ATPMSILVAN…KLSQATIKNI (288 aa)) the chain is on the cytoplasmic side. Catalysis depends on Asp-435, which acts as the 4-aspartylphosphate intermediate. The Mg(2+) site is built by Asp-631 and Asp-635. A helical transmembrane segment spans residues 686-705 (KENLFWAFCYNSVFIPLACG). The Extracellular segment spans residues 706 to 716 (VLYKANIMLSP). A helical transmembrane segment spans residues 717–735 (AIAGLAMSLSSVSVVLNSQ). Topologically, residues 736–745 (RLRNFKIKDH) are cytoplasmic.

This sequence belongs to the cation transport ATPase (P-type) (TC 3.A.3) family. Type IB subfamily.

It is found in the cell membrane. The catalysed reaction is Cu(2+)(in) + ATP + H2O = Cu(2+)(out) + ADP + phosphate + H(+). In terms of biological role, probably involved in copper export. The sequence is that of Copper-transporting ATPase (copA) from Helicobacter pylori (Campylobacter pylori).